The sequence spans 260 residues: Indole-3-glycerol phosphate synthase (260 aa).

The protein belongs to the TrpC family.

The catalysed reaction is 1-(2-carboxyphenylamino)-1-deoxy-D-ribulose 5-phosphate + H(+) = (1S,2R)-1-C-(indol-3-yl)glycerol 3-phosphate + CO2 + H2O. Its pathway is amino-acid biosynthesis; L-tryptophan biosynthesis; L-tryptophan from chorismate: step 4/5. The chain is Indole-3-glycerol phosphate synthase from Lactiplantibacillus plantarum (strain ATCC BAA-793 / NCIMB 8826 / WCFS1) (Lactobacillus plantarum).